Here is a 283-residue protein sequence, read N- to C-terminus: uncharacterized protein (283 aa).

The span at 1 to 10 (MEVNKTTESL) shows a compositional bias: polar residues. Disordered stretches follow at residues 1-96 (MEVN…SGGN) and 255-283 (DQEG…EAQI). Basic and acidic residues-rich tracts occupy residues 14–34 (KVEH…RDVK) and 44–81 (SKQE…VSSR).

It belongs to the chlamydial CPn_0705/CT_671/TC_0042 family.

This is an uncharacterized protein from Chlamydia muridarum (strain MoPn / Nigg).